The sequence spans 729 residues: Rab-like protein 6 (729 aa).

Methionine 1 is modified (N-acetylmethionine). The segment at 39 to 279 is small GTPase-like; it reads GVQYNMKIVI…IFLEMMEARS (241 aa). GTP is bound by residues 50–57, 100–104, and 177–179; these read GDRNTGKT, DVVDK, and YRD. The disordered stretch occupies residues 281-729; the sequence is GHASPLAANG…HPGGGDYEEL (449 aa). Positions 290 to 315 are enriched in low complexity; it reads GQSPSPGSQSPVVPAGAVSTGSSSPG. The span at 331–351 shows a compositional bias: pro residues; that stretch reads SSVPPVPPSEALPPPACPSAP. A compositionally biased stretch (basic and acidic residues) spans 395-416; sequence PDDRLDRSFLEDTTPARDEKKV. Residues serine 402, serine 425, serine 427, serine 470, serine 471, serine 492, serine 525, and serine 577 each carry the phosphoserine modification. The span at 489-502 shows a compositional bias: polar residues; that stretch reads QQCSEPETKWSSIP. Positions 581–595 are enriched in basic and acidic residues; that stretch reads DTQRRADDFPVRDDP. At serine 596 the chain carries Phosphoserine. A compositionally biased stretch (acidic residues) spans 596 to 605; it reads SDVTDEDEGP. At threonine 599 the chain carries Phosphothreonine. Positions 606 to 615 are enriched in pro residues; that stretch reads AEPPPPPKLP. Residues 635–652 are compositionally biased toward basic and acidic residues; the sequence is AGPKESSEEGKEGKTPSK. Phosphoserine occurs at positions 640 and 641. The tract at residues 655–693 is interaction with CDKN2A; that stretch reads KKKKKKGKEEEEKAAKKKSKHKKSKDKEEGKEERRRRQQ. The segment covering 669–678 has biased composition (basic residues); it reads AKKKSKHKKS. Residues 679–689 are compositionally biased toward basic and acidic residues; sequence KDKEEGKEERR. Positions 711-729 are enriched in gly residues; the sequence is LGGGAPGGRHPGGGDYEEL.

This sequence belongs to the small GTPase superfamily. Rab family. Isoform 1 is O-glycosylated, while other isoforms are not.

It is found in the cytoplasm. The protein localises to the nucleus. Functionally, may enhance cellular proliferation. May reduce growth inhibitory activity of CDKN2A. The chain is Rab-like protein 6 (RABL6) from Homo sapiens (Human).